The sequence spans 72 residues: Gene 42 protein (72 aa).

The sequence is that of Gene 42 protein (42) from Mycobacterium phage L5 (Mycobacteriophage L5).